Consider the following 457-residue polypeptide: Dihydrolipoyllysine-residue acetyltransferase component of pyruvate dehydrogenase complex, mitochondrial (457 aa).

A mitochondrion-targeting transit peptide spans Met1–Tyr30. One can recognise a Lipoyl-binding domain in the interval His36 to Val112. An N6-lipoyllysine modification is found at Lys77. The tract at residues Ala129–Gly168 is disordered. Residues Pro139–Ser149 are compositionally biased toward basic and acidic residues. Lys148 is modified (N6-crotonyllysine). The 38-residue stretch at Asn179–Ile216 folds into the Peripheral subunit-binding (PSBD) domain. Residues His430 and Asp434 contribute to the active site.

This sequence belongs to the 2-oxoacid dehydrogenase family. Eukaryotic pyruvate dehydrogenase (PDH) complexes are organized as a core consisting of the oligomeric dihydrolipoamide acetyl-transferase (E2), around which are arranged multiple copies of pyruvate dehydrogenase (E1), dihydrolipoamide dehydrogenase (E3) and protein X (E3BP) bound by non-covalent bonds. Interacts with SIR5; the interaction is direct. (R)-lipoate is required as a cofactor. In terms of processing, decrotonylated at 'Lys-148' by SIR5, which inhibits the activity of the pyruvate dehydrogenase complex (PDC).

Its subcellular location is the mitochondrion matrix. The catalysed reaction is N(6)-[(R)-dihydrolipoyl]-L-lysyl-[protein] + acetyl-CoA = N(6)-[(R)-S(8)-acetyldihydrolipoyl]-L-lysyl-[protein] + CoA. Its function is as follows. The pyruvate dehydrogenase complex catalyzes the overall conversion of pyruvate to acetyl-CoA and CO(2). High pyruvate dehydrogenase complex activity is required for sufficient energy production during germination of conidia. The polypeptide is Dihydrolipoyllysine-residue acetyltransferase component of pyruvate dehydrogenase complex, mitochondrial (Fusarium oxysporum f. sp. lycopersici (strain 4287 / CBS 123668 / FGSC 9935 / NRRL 34936) (Fusarium vascular wilt of tomato)).